Here is a 704-residue protein sequence, read N- to C-terminus: Ankyrin repeat and LEM domain-containing protein 1 homolog (704 aa).

The tract at residues M1 to K29 is disordered. Positions T8 to S22 are enriched in low complexity. 2 ANK repeats span residues K28–A59 and D63–A93. Disordered stretches follow at residues N247–T293, N314–T358, and S381–D421. A compositionally biased stretch (basic residues) spans R276–S288. Composition is skewed to low complexity over residues E329 to T346 and A384 to S405. An LEM domain is found at I425–I470. In terms of domain architecture, GIY-YIG spans Y525–K635.

Phosphorylated. Phosphorylated during telophase when localized at the midbody.

It is found in the cytoplasm. It localises to the nucleus. The protein resides in the chromosome. Its subcellular location is the midbody. The protein localises to the cytoskeleton. It is found in the spindle. Inhibited by EDTA. Endonuclease which, in association with baf-1, plays an essential role during embryogenesis in the DNA repair response following DNA damage probably by ensuring proper chromosome segregation. Also required during postembryonic cell divisions after DNA damage caused by ionizing radiation to ensure normal cell proliferation. Resolves chromatin bridges in late mitosis that result from incomplete DNA replication, defective chromosome condensation or unresolved recombination intermediates. Together with brc-1, contributes to genome integrity by resolving mitotic chromatin bridges that result from incomplete processing of DNA breaks. In parallel to the slx-1/mus-81 pathway, acts in processing early recombination intermediates in meiotic prophase I to prevent illegitimate recombination. Also involved in processing remaining, erroneous recombination intermediates that persist into the second meiotic division. This is Ankyrin repeat and LEM domain-containing protein 1 homolog from Caenorhabditis elegans.